The chain runs to 396 residues: Elongation factor Tu (396 aa).

A tr-type G domain is found at 10 to 206 (KPHCNIGTIG…AVDEFIPQPT (197 aa)). Residues 19-26 (GHVDHGKT) form a G1 region. Residue 19–26 (GHVDHGKT) participates in GTP binding. A Mg(2+)-binding site is contributed by threonine 26. The tract at residues 60–64 (GITIS) is G2. Positions 81–84 (DCPG) are G3. Residues 81 to 85 (DCPGH) and 136 to 139 (NKVD) each bind GTP. Positions 136–139 (NKVD) are G4. A G5 region spans residues 174-176 (SAL).

Belongs to the TRAFAC class translation factor GTPase superfamily. Classic translation factor GTPase family. EF-Tu/EF-1A subfamily. Monomer.

It localises to the cytoplasm. It carries out the reaction GTP + H2O = GDP + phosphate + H(+). Its function is as follows. GTP hydrolase that promotes the GTP-dependent binding of aminoacyl-tRNA to the A-site of ribosomes during protein biosynthesis. The protein is Elongation factor Tu of Pelagibacter ubique (strain HTCC1062).